An 833-amino-acid chain; its full sequence is Multiple RNA-binding domain-containing protein 1 (833 aa).

Positions 2 to 83 (SRIIIKNIPR…SRIEVHRALD (82 aa)) constitute an RRM 1 domain. Positions 160–251 (ENEEVFDTEI…DAQAPLSDDE (92 aa)) are disordered. Composition is skewed to basic and acidic residues over residues 188-205 (AAKR…HDST) and 213-222 (DGREKSSSEL). 4 consecutive RRM domains span residues 323 to 401 (KRLF…PAKA), 506 to 578 (NVLL…KAPR), 619 to 702 (ATIY…LSHQ), and 721 to 798 (TKIL…YASN).

It belongs to the RRM MRD1 family.

The protein resides in the nucleus. Involved in pre-rRNA processing. This is Multiple RNA-binding domain-containing protein 1 (mrd1) from Schizosaccharomyces pombe (strain 972 / ATCC 24843) (Fission yeast).